The following is a 224-amino-acid chain: uncharacterized protein (224 aa).

6 consecutive transmembrane segments (helical) span residues 25–45, 54–74, 91–111, 119–139, 142–162, and 174–194; these read MMLA…IPFF, ISVV…SLTI, IGVL…RLYF, FCWI…LTTL, ILIT…NFLI, and HFFF…YSFF.

It is found in the cell membrane. This is an uncharacterized protein from Mycoplasma genitalium (strain ATCC 33530 / DSM 19775 / NCTC 10195 / G37) (Mycoplasmoides genitalium).